The primary structure comprises 274 residues: NAD-dependent protein deacylase (274 aa).

Residues 4–274 (CLLPSSDMDA…GELLPKALAP (271 aa)) form the Deacetylase sirtuin-type domain. Residue 29–48 (GAGVSAESGVPTFRGAGGLW) participates in NAD(+) binding. Substrate contacts are provided by Tyr73 and Arg76. 111-114 (QNID) is an NAD(+) binding site. His129 functions as the Proton acceptor in the catalytic mechanism. Cys137, Cys140, Cys178, and Cys183 together coordinate Zn(2+). Residues 220–222 (GTS), 246–248 (NME), and Cys264 each bind NAD(+).

Belongs to the sirtuin family. Class III subfamily. The cofactor is Zn(2+).

The protein localises to the mitochondrion. It catalyses the reaction N(6)-malonyl-L-lysyl-[protein] + NAD(+) + H2O = 2''-O-malonyl-ADP-D-ribose + nicotinamide + L-lysyl-[protein]. The enzyme catalyses N(6)-succinyl-L-lysyl-[protein] + NAD(+) + H2O = 2''-O-succinyl-ADP-D-ribose + nicotinamide + L-lysyl-[protein]. It carries out the reaction N(6)-glutaryl-L-lysyl-[protein] + NAD(+) + H2O = 2''-O-glutaryl-ADP-D-ribose + nicotinamide + L-lysyl-[protein]. NAD-dependent lysine demalonylase, desuccinylase and deglutarylase that specifically removes malonyl, succinyl and glutaryl groups on target proteins. Has weak NAD-dependent protein deacetylase activity; however this activity may not be physiologically relevant in vivo. The sequence is that of NAD-dependent protein deacylase from Daphnia pulex (Water flea).